We begin with the raw amino-acid sequence, 414 residues long: Imidazolonepropionase (414 aa).

Residues His-77 and His-79 each contribute to the Fe(3+) site. Zn(2+) is bound by residues His-77 and His-79. 3 residues coordinate 4-imidazolone-5-propanoate: Arg-86, Tyr-149, and His-184. Tyr-149 contacts N-formimidoyl-L-glutamate. His-249 contacts Fe(3+). A Zn(2+)-binding site is contributed by His-249. Residue Glu-252 coordinates 4-imidazolone-5-propanoate. Position 323 (Asp-323) interacts with Fe(3+). Asp-323 serves as a coordination point for Zn(2+). N-formimidoyl-L-glutamate-binding residues include Asn-325 and Gly-327. A 4-imidazolone-5-propanoate-binding site is contributed by Ser-328.

Belongs to the metallo-dependent hydrolases superfamily. HutI family. The cofactor is Zn(2+). It depends on Fe(3+) as a cofactor.

Its subcellular location is the cytoplasm. The enzyme catalyses 4-imidazolone-5-propanoate + H2O = N-formimidoyl-L-glutamate. It participates in amino-acid degradation; L-histidine degradation into L-glutamate; N-formimidoyl-L-glutamate from L-histidine: step 3/3. Its function is as follows. Catalyzes the hydrolytic cleavage of the carbon-nitrogen bond in imidazolone-5-propanoate to yield N-formimidoyl-L-glutamate. It is the third step in the universal histidine degradation pathway. The polypeptide is Imidazolonepropionase (Phocaeicola vulgatus (strain ATCC 8482 / DSM 1447 / JCM 5826 / CCUG 4940 / NBRC 14291 / NCTC 11154) (Bacteroides vulgatus)).